We begin with the raw amino-acid sequence, 505 residues long: Maturase K (505 aa).

The protein belongs to the intron maturase 2 family. MatK subfamily.

Its subcellular location is the plastid. It localises to the chloroplast. In terms of biological role, usually encoded in the trnK tRNA gene intron. Probably assists in splicing its own and other chloroplast group II introns. The protein is Maturase K of Nuphar advena (Common spatterdock).